The following is a 360-amino-acid chain: Photosystem II protein D1 3 (360 aa).

3 helical membrane-spanning segments follow: residues 29 to 46, 118 to 133, and 142 to 156; these read YVGWFGVLMIPTLLTATI, HFLLGISCYMGRQWEL, and WICVAYSAPLSAAFA. Residue histidine 118 participates in chlorophyll a binding. Pheophytin a is bound at residue tyrosine 126. Aspartate 170 and glutamate 189 together coordinate [CaMn4O5] cluster. Residues 197-218 traverse the membrane as a helical segment; sequence FHMLGVAGVFGGSLFSAMHGSL. Histidine 198 contacts chlorophyll a. Residues histidine 215 and 264–265 each bind a quinone; that span reads SF. Residue histidine 215 coordinates Fe cation. Histidine 272 contacts Fe cation. A helical membrane pass occupies residues 274-288; it reads FLGAWPVVGIWFTSM. The [CaMn4O5] cluster site is built by histidine 332, glutamate 333, aspartate 342, and alanine 344. The propeptide occupies 345–360; it reads AGEATPVALTAPSIHG.

Belongs to the reaction center PufL/M/PsbA/D family. As to quaternary structure, PSII is composed of 1 copy each of membrane proteins PsbA, PsbB, PsbC, PsbD, PsbE, PsbF, PsbH, PsbI, PsbJ, PsbK, PsbL, PsbM, PsbT, PsbX, PsbY, PsbZ, Psb30/Ycf12, peripheral proteins PsbO, CyanoQ (PsbQ), PsbU, PsbV and a large number of cofactors. It forms dimeric complexes. Requires The D1/D2 heterodimer binds P680, chlorophylls that are the primary electron donor of PSII, and subsequent electron acceptors. It shares a non-heme iron and each subunit binds pheophytin, quinone, additional chlorophylls, carotenoids and lipids. D1 provides most of the ligands for the Mn4-Ca-O5 cluster of the oxygen-evolving complex (OEC). There is also a Cl(-1) ion associated with D1 and D2, which is required for oxygen evolution. The PSII complex binds additional chlorophylls, carotenoids and specific lipids. as cofactor. Post-translationally, tyr-161 forms a radical intermediate that is referred to as redox-active TyrZ, YZ or Y-Z. C-terminally processed by CtpA; processing is essential to allow assembly of the oxygen-evolving complex and thus photosynthetic growth.

Its subcellular location is the cellular thylakoid membrane. It carries out the reaction 2 a plastoquinone + 4 hnu + 2 H2O = 2 a plastoquinol + O2. In terms of biological role, photosystem II (PSII) is a light-driven water:plastoquinone oxidoreductase that uses light energy to abstract electrons from H(2)O, generating O(2) and a proton gradient subsequently used for ATP formation. It consists of a core antenna complex that captures photons, and an electron transfer chain that converts photonic excitation into a charge separation. The D1/D2 (PsbA/PsbD) reaction center heterodimer binds P680, the primary electron donor of PSII as well as several subsequent electron acceptors. This is Photosystem II protein D1 3 from Synechococcus sp. (strain ATCC 27144 / PCC 6301 / SAUG 1402/1) (Anacystis nidulans).